A 432-amino-acid polypeptide reads, in one-letter code: Luc7-like protein 3 (432 aa).

The residue at position 1 (Met1) is an N-acetylmethionine. Residues Ser3, Ser110, and Ser115 each carry the phosphoserine modification. The stretch at 124–181 forms a coiled coil; sequence KNEEKIQVLTDKIDVLLQQIEELGSEGKVEEAQGMMKLVEQLKEERELLRSTTSTIES. Lys231 is subject to N6-acetyllysine. The span at 234–287 shows a compositional bias: basic and acidic residues; sequence LRKRTEEPDRDERLKKEKQEREEREKEREREREERERKRRREEEEREKERARDR. Positions 234 to 432 are disordered; the sequence is LRKRTEEPDR…IKSEGDTQSN (199 aa). Basic residues predominate over residues 288–301; that stretch reads ERRKRSRSRSRHSS. Positions 302-311 are enriched in basic and acidic residues; sequence RTSDRRCSRS. The span at 312–367 shows a compositional bias: basic residues; it reads RDHKRSRSRERRRSRSRDRRRSRSHDRSERKHRSRSRDRRRSKSRDRKSYKHRSKS. Over residues 368–414 the composition is skewed to basic and acidic residues; the sequence is RDREQDRKSKEKEKRGSDDKKSSVKSGSREKQSEDTNTESKESDTKN. Ser420 bears the Phosphoserine mark. A compositionally biased stretch (basic and acidic residues) spans 421–432; the sequence is EDIKSEGDTQSN. Residue Lys424 forms a Glycyl lysine isopeptide (Lys-Gly) (interchain with G-Cter in SUMO1); alternate linkage. Residue Lys424 forms a Glycyl lysine isopeptide (Lys-Gly) (interchain with G-Cter in SUMO2); alternate linkage. Ser425 and Ser431 each carry phosphoserine.

This sequence belongs to the Luc7 family. May interact with SFRS1 and form homodimers. Interacts with JMJD6. Interacts with RBM25. Interacts with RSRC1 (via Arg/Ser-rich domain). Interacts with RRP1B. In terms of processing, phosphorylated in vitro by SRPK1, SRPK2 and CLK1. Widely expressed. Highest levels in heart, brain, pancreas, thymus, ovary, small intestine and peripheral blood leukocytes, as well as cerebellum, putamen and pituitary gland. Lowest levels in lung, liver and kidney. Also expressed in fetal tissues, including brain, heart, kidney, thymus and lung.

The protein resides in the nucleus speckle. In terms of biological role, binds cAMP regulatory element DNA sequence. May play a role in RNA splicing. The sequence is that of Luc7-like protein 3 (LUC7L3) from Homo sapiens (Human).